We begin with the raw amino-acid sequence, 866 residues long: DNA mismatch repair protein MutS (866 aa).

An ATP-binding site is contributed by 618 to 625 (GPNMSGKS).

It belongs to the DNA mismatch repair MutS family.

Functionally, this protein is involved in the repair of mismatches in DNA. It is possible that it carries out the mismatch recognition step. This protein has a weak ATPase activity. This chain is DNA mismatch repair protein MutS, found in Flavobacterium psychrophilum (strain ATCC 49511 / DSM 21280 / CIP 103535 / JIP02/86).